The chain runs to 391 residues: UPF0229 protein BAA_0633 (391 aa).

Polar residues predominate over residues 1 to 16; sequence MGEENQPNYTISQENW. Disordered stretches follow at residues 1-31 and 80-117; these read MGEE…RHQE and HVGQ…GDAA. Residues 21-31 are compositionally biased toward basic and acidic residues; the sequence is KGYDDQQRHQE. The span at 98–115 shows a compositional bias: gly residues; that stretch reads GSGGQKQKGPGKGQGAGD.

This sequence belongs to the UPF0229 family.

The sequence is that of UPF0229 protein BAA_0633 from Bacillus anthracis (strain A0248).